A 293-amino-acid chain; its full sequence is 4-diphosphocytidyl-2-C-methyl-D-erythritol kinase (293 aa).

Lys-10 is a catalytic residue. 96-106 serves as a coordination point for ATP; sequence PVASGIGGGSS. Asp-138 is a catalytic residue.

This sequence belongs to the GHMP kinase family. IspE subfamily.

The catalysed reaction is 4-CDP-2-C-methyl-D-erythritol + ATP = 4-CDP-2-C-methyl-D-erythritol 2-phosphate + ADP + H(+). It functions in the pathway isoprenoid biosynthesis; isopentenyl diphosphate biosynthesis via DXP pathway; isopentenyl diphosphate from 1-deoxy-D-xylulose 5-phosphate: step 3/6. In terms of biological role, catalyzes the phosphorylation of the position 2 hydroxy group of 4-diphosphocytidyl-2C-methyl-D-erythritol. In Chelativorans sp. (strain BNC1), this protein is 4-diphosphocytidyl-2-C-methyl-D-erythritol kinase.